The chain runs to 88 residues: Elongation factor 1-beta (88 aa).

Belongs to the EF-1-beta/EF-1-delta family.

Functionally, promotes the exchange of GDP for GTP in EF-1-alpha/GDP, thus allowing the regeneration of EF-1-alpha/GTP that could then be used to form the ternary complex EF-1-alpha/GTP/AAtRNA. The protein is Elongation factor 1-beta (ef1b) of Thermoplasma volcanium (strain ATCC 51530 / DSM 4299 / JCM 9571 / NBRC 15438 / GSS1).